Reading from the N-terminus, the 463-residue chain is Mitochondrial dynamics protein MID49 (463 aa).

At 1 to 24 (MAELQIRKKEKKSGDGIGTMVDFL) the chain is on the mitochondrial intermembrane side. A helical transmembrane segment spans residues 25-47 (LANARLVLGVGGAAMLGIATLAV). Residues 48–463 (KRLIDRATSP…EPDDVLKRER (416 aa)) lie on the Cytoplasmic side of the membrane. The interval 87–119 (TLRRKEDLEHHCAPLSLPDPSQKMPEATGTSQV) is disordered. Basic and acidic residues predominate over residues 89–98 (RRKEDLEHHC).

This sequence belongs to the MID49/MID51 family.

Its subcellular location is the mitochondrion outer membrane. Its function is as follows. Mitochondrial outer membrane protein which regulates mitochondrial organization. It is required for mitochondrial fission and promotes the recruitment and association of the fission mediator dynamin-related protein 1 (DNM1L) to the mitochondrial surface independently of the mitochondrial fission FIS1 and MFF proteins. Regulates DNM1L GTPase activity. The polypeptide is Mitochondrial dynamics protein MID49 (mief2) (Xenopus laevis (African clawed frog)).